A 381-amino-acid chain; its full sequence is Beta-1,4-galactosyltransferase 5 (381 aa).

Over Met-1–Ser-11 the chain is Cytoplasmic. The helical; Signal-anchor for type II membrane protein transmembrane segment at Phe-12 to Ala-32 threads the bilayer. Topologically, residues Pro-33–Tyr-381 are lumenal. Residues Asn-73, Asn-82, and Asn-120 are each glycosylated (N-linked (GlcNAc...) asparagine). Residues Cys-106 and Cys-151 are joined by a disulfide bond. Residues Pro-162–Arg-166, Phe-201–Arg-203, Val-228–Asp-229, Tyr-257, and Trp-289 contribute to the UDP-alpha-D-galactose site. The cysteines at positions 222 and 241 are disulfide-linked. Asp-229 contacts Mn(2+). Gly-291 to Asp-294 serves as a coordination point for N-acetyl-D-glucosamine. His-322 serves as a coordination point for Mn(2+). His-322–His-323 contacts UDP-alpha-D-galactose. N-acetyl-D-glucosamine is bound at residue Arg-333. Residue Asn-366 is glycosylated (N-linked (GlcNAc...) asparagine).

The protein belongs to the glycosyltransferase 7 family. Mn(2+) is required as a cofactor.

Its subcellular location is the golgi apparatus. The protein localises to the golgi stack membrane. The enzyme catalyses a beta-D-glucosyl-(1&lt;-&gt;1')-N-acylsphing-4-enine + UDP-alpha-D-galactose = a beta-D-Gal-(1-&gt;4)-beta-D-Glc-(1&lt;-&gt;1)-Cer(d18:1(4E)) + UDP + H(+). The protein operates within protein modification; protein glycosylation. Its pathway is sphingolipid metabolism. Its function is as follows. Catalyzes the synthesis of lactosylceramide (LacCer) via the transfer of galactose from UDP-galactose to glucosylceramide (GlcCer). Required for proper patterning of the dorsoventral axis during embryogenesis through the regulation of BMP signaling. Plays a role in proteoglycan glycosylation that is required for BMP-dependent specification of the dorsoventral axis. The sequence is that of Beta-1,4-galactosyltransferase 5 (b4galt5) from Danio rerio (Zebrafish).